A 444-amino-acid polypeptide reads, in one-letter code: MRLSRFFLPILKENPKEAEIVSHRLMLRAGMLRQEAAGIYAWLPLGFKVLKKIEQIVREEQNRAGALELLMPTLQLADLWRESGRYDAYGPEMLRISDRHKRELLYGPTNEEMITDIFRAYVKSYRNLPLNLYHIQWKFRDEQRPRFGVMRGREFLMKDAYSFDLDEAGARRAYNKMFVAYLRTFARMGLKGIPMRAETGPIGGDLSHEFIVLAETGESGVYCDRDVLDLPIPPASVDYDGDLTPIIKQWTSLYAATEDVHDGARFEAEVPEERRLHTRGIEVGQIFYFGTKYSEPMKALVAGPDGAEVTIHGGSYGVGVSRLAGAIIEACHDDAGIKWPEEVAPFRAVILNLKQGGSDTDAACEQLYRDLLAKGVDVLYDDTEQRAGGKFATADLIGIPWQIMVGPKSLAEGKVEVKTRSDGARQMMSPADVVARLGGGTVAG.

This sequence belongs to the class-II aminoacyl-tRNA synthetase family. ProS type 2 subfamily. In terms of assembly, homodimer.

The protein resides in the cytoplasm. The catalysed reaction is tRNA(Pro) + L-proline + ATP = L-prolyl-tRNA(Pro) + AMP + diphosphate. Functionally, catalyzes the attachment of proline to tRNA(Pro) in a two-step reaction: proline is first activated by ATP to form Pro-AMP and then transferred to the acceptor end of tRNA(Pro). The protein is Proline--tRNA ligase of Bradyrhizobium sp. (strain BTAi1 / ATCC BAA-1182).